The chain runs to 124 residues: Small ribosomal subunit protein uS13 (124 aa).

The disordered stretch occupies residues 95-124; that stretch reads GLPVNGQRTRTNARSSKGPRRTVAGKKKAR. Over residues 100-109 the composition is skewed to polar residues; sequence GQRTRTNARS. Residues 111-124 show a composition bias toward basic residues; sequence KGPRRTVAGKKKAR.

Belongs to the universal ribosomal protein uS13 family. In terms of assembly, part of the 30S ribosomal subunit. Forms a loose heterodimer with protein S19. Forms two bridges to the 50S subunit in the 70S ribosome.

Its function is as follows. Located at the top of the head of the 30S subunit, it contacts several helices of the 16S rRNA. In the 70S ribosome it contacts the 23S rRNA (bridge B1a) and protein L5 of the 50S subunit (bridge B1b), connecting the 2 subunits; these bridges are implicated in subunit movement. Contacts the tRNAs in the A and P-sites. This is Small ribosomal subunit protein uS13 from Tropheryma whipplei (strain TW08/27) (Whipple's bacillus).